Here is a 303-residue protein sequence, read N- to C-terminus: Putative S-adenosyl-L-methionine-dependent methyltransferase MAB_0213c (303 aa).

S-adenosyl-L-methionine is bound by residues Asp126 and 155–156 (DL).

This sequence belongs to the UPF0677 family.

Exhibits S-adenosyl-L-methionine-dependent methyltransferase activity. The polypeptide is Putative S-adenosyl-L-methionine-dependent methyltransferase MAB_0213c (Mycobacteroides abscessus (strain ATCC 19977 / DSM 44196 / CCUG 20993 / CIP 104536 / JCM 13569 / NCTC 13031 / TMC 1543 / L948) (Mycobacterium abscessus)).